Here is a 476-residue protein sequence, read N- to C-terminus: Aspartyl/glutamyl-tRNA(Asn/Gln) amidotransferase subunit B (476 aa).

The protein belongs to the GatB/GatE family. GatB subfamily. In terms of assembly, heterotrimer of A, B and C subunits.

The catalysed reaction is L-glutamyl-tRNA(Gln) + L-glutamine + ATP + H2O = L-glutaminyl-tRNA(Gln) + L-glutamate + ADP + phosphate + H(+). The enzyme catalyses L-aspartyl-tRNA(Asn) + L-glutamine + ATP + H2O = L-asparaginyl-tRNA(Asn) + L-glutamate + ADP + phosphate + 2 H(+). Allows the formation of correctly charged Asn-tRNA(Asn) or Gln-tRNA(Gln) through the transamidation of misacylated Asp-tRNA(Asn) or Glu-tRNA(Gln) in organisms which lack either or both of asparaginyl-tRNA or glutaminyl-tRNA synthetases. The reaction takes place in the presence of glutamine and ATP through an activated phospho-Asp-tRNA(Asn) or phospho-Glu-tRNA(Gln). This chain is Aspartyl/glutamyl-tRNA(Asn/Gln) amidotransferase subunit B, found in Neisseria meningitidis serogroup A / serotype 4A (strain DSM 15465 / Z2491).